A 343-amino-acid polypeptide reads, in one-letter code: Lactamase-like protein nscB (343 aa).

Residues H118, H120, D122, and H123 each contribute to the Zn(2+) site. Residue D122 is the Proton donor/acceptor of the active site.

This sequence belongs to the metallo-beta-lactamase superfamily. It depends on Zn(2+) as a cofactor.

It functions in the pathway secondary metabolite biosynthesis. In terms of biological role, lactamase-like protein; part of the gene cluster that mediates the biosynthesis of neosartoricin B, a prenylated anthracenone that probably exhibits T-cell antiproliferative activity, suggestive of a physiological role as an immunosuppressive agent. The non-reducing polyketide synthase nscA probably synthesizes and cyclizes the decaketide backbone. The hydrolase nscB then mediates the product release through hydrolysis followed by spontaneous decarboxylation. The prenyltransferase nscD catalyzes the addition of the dimethylallyl group to the aromatic C5. The FAD-dependent monooxygenase nscC is then responsible for the stereospecific hydroxylation at C2. Neosartoricin B can be converted into two additional compounds neosartoricins C and D. Neosartoricin C is a spirocyclic compound that is cyclized through the attack of C3 hydroxyl on C14, followed by dehydration. On the other hand, neosartoricin D is a further cyclized compound in which attack of C2 on C14 in neosartoricin C results in the formation of the acetal-containing dioxabicyclo-octanone ring. Both of these compounds are novel and possibly represent related metabolites of the gene cluster. This is Lactamase-like protein nscB from Arthroderma otae (strain ATCC MYA-4605 / CBS 113480) (Microsporum canis).